We begin with the raw amino-acid sequence, 304 residues long: MSAQDLSPSRRSIPEPRAMLELIKPVTWFPPMWAYLCGAVSSNVPIWENKGVVVLGIVLAGPIVCGMSQAANDWCDRHVDAINEPHRPIPSGRIPGLWGLYIAIAMSLLSLVVGWQLGSWGFVATLLGVAAAWAYSVEPIRLKRSGWWGPGLVGLAYEGLPWITGAAVLLATADTSPGFPIVMMATLYALGAHGIMTINDFKAIEGDRKLGIKSLPAVYGPEVAAKIACTVMGLAQALVITMLYLFSKPYHATAVLVLLCGQFWAMSVWMRDPEGKAPWYNGTGVVMYVSGMMITAFAIRGFTV.

9 consecutive transmembrane segments (helical) span residues 26 to 46, 51 to 71, 94 to 114, 117 to 137, 151 to 171, 178 to 198, 227 to 247, 250 to 270, and 279 to 299; these read VTWF…NVPI, GVVV…SQAA, IPGL…LVVG, LGSW…AYSV, GLVG…VLLA, GFPI…IMTI, IACT…YLFS, YHAT…SVWM, and WYNG…AFAI.

It localises to the cell membrane. It participates in porphyrin-containing compound metabolism; bacteriochlorophyll biosynthesis (light-independent). In terms of biological role, catalyzes the esterification of bacteriochlorophyllide a by geranylgeraniol-PPi. The protein is Bacteriochlorophyll synthase 33 kDa chain (bchG) of Rhodobacter capsulatus (strain ATCC BAA-309 / NBRC 16581 / SB1003).